The primary structure comprises 651 residues: DNA mismatch repair protein MutL (651 aa).

The interval 383–405 (TAAEEPTPAPTSPDLEIGDLDDQ) is disordered.

It belongs to the DNA mismatch repair MutL/HexB family.

Its function is as follows. This protein is involved in the repair of mismatches in DNA. It is required for dam-dependent methyl-directed DNA mismatch repair. May act as a 'molecular matchmaker', a protein that promotes the formation of a stable complex between two or more DNA-binding proteins in an ATP-dependent manner without itself being part of a final effector complex. In Lacticaseibacillus paracasei (strain ATCC 334 / BCRC 17002 / CCUG 31169 / CIP 107868 / KCTC 3260 / NRRL B-441) (Lactobacillus paracasei), this protein is DNA mismatch repair protein MutL.